We begin with the raw amino-acid sequence, 294 residues long: Nucleotide-binding protein DICTH_1001 (294 aa).

10–17 is an ATP binding site; the sequence is GLSGAGKS. 61–64 is a binding site for GTP; that stretch reads DIRT.

This sequence belongs to the RapZ-like family.

Displays ATPase and GTPase activities. This Dictyoglomus thermophilum (strain ATCC 35947 / DSM 3960 / H-6-12) protein is Nucleotide-binding protein DICTH_1001.